Here is a 120-residue protein sequence, read N- to C-terminus: UPF0342 protein Csac_0863 (120 aa).

The protein belongs to the UPF0342 family.

The protein is UPF0342 protein Csac_0863 of Caldicellulosiruptor saccharolyticus (strain ATCC 43494 / DSM 8903 / Tp8T 6331).